A 74-amino-acid chain; its full sequence is DNA-directed RNA polymerase subunit omega (74 aa).

It belongs to the RNA polymerase subunit omega family. As to quaternary structure, the RNAP catalytic core consists of 2 alpha, 1 beta, 1 beta' and 1 omega subunit. When a sigma factor is associated with the core the holoenzyme is formed, which can initiate transcription.

It catalyses the reaction RNA(n) + a ribonucleoside 5'-triphosphate = RNA(n+1) + diphosphate. In terms of biological role, promotes RNA polymerase assembly. Latches the N- and C-terminal regions of the beta' subunit thereby facilitating its interaction with the beta and alpha subunits. This is DNA-directed RNA polymerase subunit omega from Lactobacillus acidophilus (strain ATCC 700396 / NCK56 / N2 / NCFM).